The sequence spans 290 residues: Glutamyl-Q tRNA(Asp) synthetase (290 aa).

L-glutamate contacts are provided by residues 9–13 (RFAPS) and Glu45. The 'HIGH' region motif lies at 12–22 (PSPSGSLHFGS). Residues Cys101, Cys103, Tyr115, and Cys119 each contribute to the Zn(2+) site. Positions 170 and 188 each coordinate L-glutamate. The 'KMSKS' region signature appears at 226–230 (KLSKQ). Lys229 contributes to the ATP binding site.

Belongs to the class-I aminoacyl-tRNA synthetase family. GluQ subfamily. It depends on Zn(2+) as a cofactor.

Catalyzes the tRNA-independent activation of glutamate in presence of ATP and the subsequent transfer of glutamate onto a tRNA(Asp). Glutamate is transferred on the 2-amino-5-(4,5-dihydroxy-2-cyclopenten-1-yl) moiety of the queuosine in the wobble position of the QUC anticodon. This chain is Glutamyl-Q tRNA(Asp) synthetase, found in Shewanella amazonensis (strain ATCC BAA-1098 / SB2B).